The primary structure comprises 129 residues: MAFEFPASFRFADSHEYANADGELVRVGISAFAVDQLGDIVFVDLPDVGDSLDKGATFGSVESVKAVEDMYAPVAGEVVQRNEAVLASPEELQNDPHGEGWLLVLRPSDPSQLEALMDAGTYGTKVNAG.

Positions leucine 24–arginine 106 constitute a Lipoyl-binding domain. An N6-lipoyllysine modification is found at lysine 65.

This sequence belongs to the GcvH family. The glycine cleavage system is composed of four proteins: P, T, L and H. Requires (R)-lipoate as cofactor.

The glycine cleavage system catalyzes the degradation of glycine. The H protein shuttles the methylamine group of glycine from the P protein to the T protein. This Parasynechococcus marenigrum (strain WH8102) protein is Glycine cleavage system H protein.